The sequence spans 123 residues: UPF0102 protein DR_2282 (123 aa).

It belongs to the UPF0102 family.

This is UPF0102 protein DR_2282 from Deinococcus radiodurans (strain ATCC 13939 / DSM 20539 / JCM 16871 / CCUG 27074 / LMG 4051 / NBRC 15346 / NCIMB 9279 / VKM B-1422 / R1).